The primary structure comprises 159 residues: Protein-export protein SecB (159 aa).

It belongs to the SecB family. In terms of assembly, homotetramer, a dimer of dimers. One homotetramer interacts with 1 SecA dimer.

It localises to the cytoplasm. Functionally, one of the proteins required for the normal export of preproteins out of the cell cytoplasm. It is a molecular chaperone that binds to a subset of precursor proteins, maintaining them in a translocation-competent state. It also specifically binds to its receptor SecA. The polypeptide is Protein-export protein SecB (Rhizobium etli (strain CIAT 652)).